A 1481-amino-acid chain; its full sequence is ABC multidrug transporter atrH (1481 aa).

The segment covering 1 to 10 (MALPREERSL) has biased composition (basic and acidic residues). 2 disordered regions span residues 1–45 (MALP…GIEQ) and 61–89 (ISQT…SDQF). N-linked (GlcNAc...) asparagine glycosylation is found at N19, N76, and N320. The ABC transporter 1 domain occupies 134–396 (ATVSNVWLKA…FIEMGFDCPE (263 aa)). Residues 507–527 (MTLSTVIGNSILALIISSVFY) form a helical membrane-spanning segment. N530 is a glycosylation site (N-linked (GlcNAc...) asparagine). The next 5 helical transmembrane spans lie at 542–562 (LLFF…LTLW), 587–607 (LIVD…ILYF), 616–636 (GHFF…SNVF), 650–670 (EVPA…TIPV), and 758–778 (FGIL…ASEL). Residues 838 to 1081 (FHWQDVCYDI…LIKYFEDKGS (244 aa)) form the ABC transporter 2 domain. 874–881 (GVTGAGKT) contributes to the ATP binding site. A run of 6 helical transmembrane segments spans residues 1174–1194 (YIYA…FTFW), 1210–1230 (IFML…YFAM), 1249–1269 (AFML…AVPA), 1298–1318 (LLVL…IAGI), 1327–1347 (IAQL…SPDV), and 1358–1378 (ASPF…GAPV). The N-linked (GlcNAc...) asparagine glycan is linked to N1395. Residues 1446 to 1466 (VGILFVYIVFNTVAAVFLYWL) form a helical membrane-spanning segment.

Belongs to the ABC transporter superfamily. ABCG family. PDR (TC 3.A.1.205) subfamily.

Its subcellular location is the cell membrane. In terms of biological role, pleiotropic ABC efflux transporter involved in the basal level of azole susceptibility. The protein is ABC multidrug transporter atrH of Aspergillus oryzae (strain ATCC 42149 / RIB 40) (Yellow koji mold).